The following is a 326-amino-acid chain: MENVFDYEDIQLIPAKCIVNSRSECDTSVRLGGHTFKLPVVPANMQTIIDEKLAISLAENGYFYVMHRFEPETRIDFIKDMNARGLFSSISVGVKDEEYEFVRQLAEENLTPEYVTIDIAHGHSNAVIEMIQHLKKHLPDSFVIAGNVGTPEAVRELENAGADATKVGIGPGKVCITKIKTGFGTGGWQLAALRWCAKAASKPIIADGGIRTHGDIAKSIRFGATMVMIGSLFAGHEESPGQTIEKDGKLYKEYFGSASEFQKGEKKNVEGKKMHVAHKGSIKDTLIEMEQDLQSSISYAGGTKLNAIRNVDYVIVKNSIFNGDKY.

C175 (thioimidate intermediate) is an active-site residue. Residue 204–227 coordinates NADP(+); it reads IIADGGIRTHGDIAKSIRFGATMV.

Belongs to the IMPDH/GMPR family. GuaC type 2 subfamily.

The catalysed reaction is IMP + NH4(+) + NADP(+) = GMP + NADPH + 2 H(+). Functionally, catalyzes the irreversible NADPH-dependent deamination of GMP to IMP. It functions in the conversion of nucleobase, nucleoside and nucleotide derivatives of G to A nucleotides, and in maintaining the intracellular balance of A and G nucleotides. The protein is GMP reductase (guaC) of Bacillus subtilis (strain 168).